Here is a 107-residue protein sequence, read N- to C-terminus: Ribonuclease P protein component 4 (107 aa).

Cys-66, Cys-69, Cys-92, and Cys-95 together coordinate Zn(2+).

This sequence belongs to the eukaryotic/archaeal RNase P protein component 4 family. Consists of a catalytic RNA component and at least 4-5 protein subunits. Requires Zn(2+) as cofactor.

Its subcellular location is the cytoplasm. It carries out the reaction Endonucleolytic cleavage of RNA, removing 5'-extranucleotides from tRNA precursor.. In terms of biological role, part of ribonuclease P, a protein complex that generates mature tRNA molecules by cleaving their 5'-ends. This Methanosarcina barkeri (strain Fusaro / DSM 804) protein is Ribonuclease P protein component 4.